We begin with the raw amino-acid sequence, 234 residues long: Glycerol uptake facilitator protein (234 aa).

6 helical membrane-spanning segments follow: residues 9–29, 37–57, 61–81, 83–103, 135–155, and 159–179; these read FLGT…VVLP, GWIV…FVSG, PAHL…LPWA, VLPY…LVWL, LISE…LGLY, and AGIG…SLGG. Positions 65 to 67 match the NPA 1 motif; it reads NPA. The short motif at 186–188 is the NPA 2 element; sequence NPA. The helical transmembrane segment at 214–234 threads the bilayer; that stretch reads WIPVVGPVIGAALAVLVFSLF.

Belongs to the MIP/aquaporin (TC 1.A.8) family.

It localises to the cell membrane. The catalysed reaction is glycerol(in) = glycerol(out). Its function is as follows. Mediates glycerol diffusion across the cytoplasmic membrane via a pore-type mechanism. This Streptococcus pneumoniae (strain ATCC BAA-255 / R6) protein is Glycerol uptake facilitator protein (glpF).